Reading from the N-terminus, the 186-residue chain is Lipid A palmitoyltransferase PagP (186 aa).

The signal sequence occupies residues 1–25 (MNVSKYVAIFFFVFIQLISVGKVFA). Active-site residues include histidine 58, aspartate 101, and serine 102.

The protein belongs to the lipid A palmitoyltransferase family. In terms of assembly, homodimer.

The protein localises to the cell outer membrane. The catalysed reaction is lipid A (E. coli) + a 1-hexadecanoyl-2-acyl-sn-glycero-3-phosphocholine = hepta-acyl lipid A (E. coli) + a 2-acyl-sn-glycero-3-phosphocholine. The enzyme catalyses lipid IIA + a 1-hexadecanoyl-2-acyl-sn-glycero-3-phosphocholine = lipid IIB + a 2-acyl-sn-glycero-3-phosphocholine. It carries out the reaction lipid IVA (E. coli) + a 1-hexadecanoyl-2-acyl-sn-glycero-3-phosphocholine = lipid IVB (E. coli) + a 2-acyl-sn-glycero-3-phosphocholine. Its function is as follows. Transfers a palmitate residue from the sn-1 position of a phospholipid to the N-linked hydroxymyristate on the proximal unit of lipid A or its precursors. The chain is Lipid A palmitoyltransferase PagP from Escherichia coli O6:H1 (strain CFT073 / ATCC 700928 / UPEC).